The chain runs to 800 residues: DNA topoisomerase 4 subunit A (800 aa).

The 465-residue stretch at 31 to 495 (LPDVRDGLKP…EIEEIKIDKE (465 aa)) folds into the Topo IIA-type catalytic domain. Catalysis depends on Tyr-119, which acts as the O-(5'-phospho-DNA)-tyrosine intermediate.

The protein belongs to the type II topoisomerase GyrA/ParC subunit family. ParC type 2 subfamily. In terms of assembly, heterotetramer composed of ParC and ParE.

The protein resides in the cell membrane. It catalyses the reaction ATP-dependent breakage, passage and rejoining of double-stranded DNA.. In terms of biological role, topoisomerase IV is essential for chromosome segregation. It relaxes supercoiled DNA. Performs the decatenation events required during the replication of a circular DNA molecule. The chain is DNA topoisomerase 4 subunit A from Staphylococcus aureus.